We begin with the raw amino-acid sequence, 509 residues long: Solute carrier family 2, facilitated glucose transporter member 4 (509 aa).

Topologically, residues 1–23 (MPSGFQQIGSDDGEPPRQRVTGT) are cytoplasmic. Residues 7 to 13 (QIGSDDG) form an interaction with SRFBP1 region. S10 is modified (phosphoserine). A helical membrane pass occupies residues 24-44 (LVLAVFSAVLGSLQFGYNIGV). Over 45 to 80 (INAPQKVIEQSYNATWLGRQGPGGPDSIPQGTLTTL) the chain is Extracellular. An N-linked (GlcNAc...) asparagine glycan is attached at N57. Residues 81 to 101 (WALSVAIFSVGGMISSFLIGI) form a helical membrane-spanning segment. The Cytoplasmic portion of the chain corresponds to 102-110 (ISQWLGRKR). A helical membrane pass occupies residues 111-131 (AMLANNVLAVLGGALMGLANA). At 132 to 141 (AASYEILILG) the chain is on the extracellular side. A helical membrane pass occupies residues 142–162 (RFLIGAYSGLTSGLVPMYVGE). The Cytoplasmic portion of the chain corresponds to 163–170 (IAPTHLRG). A helical transmembrane segment spans residues 171–191 (ALGTLNQLAIVIGILVAQVLG). D-glucose is bound at residue Q177. At 192-200 (LESMLGTAT) the chain is on the extracellular side. Residues 201-221 (LWPLLLALTVLPALLQLILLP) form a helical membrane-spanning segment. Residues 222 to 286 (FCPESPRYLY…QLLGSRTHRQ (65 aa)) are Cytoplasmic-facing. Residue C223 is the site of S-palmitoyl cysteine attachment. Residue S274 is modified to Phosphoserine; by SGK1. Residues 287 to 307 (PLIIAVVLQLSQQLSGINAVF) traverse the membrane as a helical segment. D-glucose-binding positions include 298-299 (QQ) and N304. Over 308–322 (YYSTSIFESAGVGQP) the chain is Extracellular. Residues 323 to 343 (AYATIGAGVVNTVFTLVSVLL) form a helical membrane-spanning segment. N333 contacts D-glucose. Over 344–352 (VERAGRRTL) the chain is Cytoplasmic. The helical transmembrane segment at 353-373 (HLLGLAGMCGCAILMTVALLL) threads the bilayer. The Extracellular segment spans residues 374-384 (LERVPAMSYVS). The helical transmembrane segment at 385–405 (IVAIFGFVAFFEIGPGPIPWF) threads the bilayer. D-glucose is bound by residues E396 and W404. Residues 406–416 (IVAELFSQGPR) lie on the Cytoplasmic side of the membrane. Residues 417-437 (PAAMAVAGFSNWTCNFIVGMG) traverse the membrane as a helical segment. Topologically, residues 438–444 (FQYVADA) are extracellular. A helical membrane pass occupies residues 445 to 465 (MGPYVFLLFAVLLLGFFIFTF). At 466-508 (LKVPETRGRTFDQISAAFRRTPSLLEQEVKPSTELEYLGPDEN) the chain is on the cytoplasmic side. T486 is modified (phosphothreonine). Residue S488 is modified to Phosphoserine. The Dileucine internalization motif signature appears at 489–490 (LL).

This sequence belongs to the major facilitator superfamily. Sugar transporter (TC 2.A.1.1) family. Glucose transporter subfamily. Binds to DAXX. Interacts via its N-terminus with SRFBP1. Interacts with NDUFA9. Interacts with TRARG1; the interaction is required for proper SLC2A4 recycling after insulin stimulation. Sumoylated. Post-translationally, palmitoylated. Palmitoylation by ZDHHC7 controls the insulin-dependent translocation of GLUT4 to the plasma membrane. As to expression, expressed in skeletal and cardiac muscles. Expressed in brown and white adipose tissues.

It localises to the cell membrane. The protein resides in the endomembrane system. It is found in the cytoplasm. Its subcellular location is the perinuclear region. It carries out the reaction D-glucose(out) = D-glucose(in). Functionally, insulin-regulated facilitative glucose transporter, which plays a key role in removal of glucose from circulation. Response to insulin is regulated by its intracellular localization: in the absence of insulin, it is efficiently retained intracellularly within storage compartments in muscle and fat cells. Upon insulin stimulation, translocates from these compartments to the cell surface where it transports glucose from the extracellular milieu into the cell. This chain is Solute carrier family 2, facilitated glucose transporter member 4, found in Mus musculus (Mouse).